Reading from the N-terminus, the 266-residue chain is Protein crossbronx-like (266 aa).

Residues 15-178 (KQGYHILAEY…VQEQAILSRN (164 aa)) enclose the UBC core domain. A disordered region spans residues 234–266 (SSRQLDEEEANQVEKLHRGRIPEHQREESEVSL). Residues 245-266 (QVEKLHRGRIPEHQREESEVSL) are compositionally biased toward basic and acidic residues.

The protein belongs to the ubiquitin-conjugating enzyme family. FTS subfamily.

The chain is Protein crossbronx-like from Drosophila melanogaster (Fruit fly).